The following is a 352-amino-acid chain: N-terminal EF-hand calcium-binding protein 1 (352 aa).

S4 is subject to Phosphoserine. EF-hand domains lie at 26–61 and 60–95; these read KGMS…GVLS and LSGE…HLGE. Ca(2+) is bound by residues D39, N41, D43, K45, and E50. Residues 135–163 are a coiled coil; it reads LLKETLNQLQSLQNSLECAMETTEEQTRQ. A disordered region spans residues 180-202; it reads GKRSSRRVQRHNSFSPNSPQFNV. Residues 190–202 show a composition bias toward polar residues; it reads HNSFSPNSPQFNV. A phosphoserine mark is found at S192 and S197. Residues 209 to 275 adopt a coiled-coil conformation; the sequence is EEDNQWMTQI…EEFQLALKHY (67 aa). Residues 252-340 enclose the ABM domain; it reads MLVQRQMSVI…LETPELTSTM (89 aa).

In terms of assembly, interacts with STX1. May interact with CPNE6.

The protein resides in the cytoplasm. This is N-terminal EF-hand calcium-binding protein 1 (NECAB1) from Pongo abelii (Sumatran orangutan).